The sequence spans 553 residues: Solute carrier family 22 member 12 (553 aa).

Residues 10–30 traverse the membrane as a helical segment; it reads VGGLGRFQLFQTVALVTPILW. Residue Asn-56 is glycosylated (N-linked (GlcNAc...) asparagine). Helical transmembrane passes span 146–166, 182–202, 204–224, 232–252, 260–280, 351–371, 378–398, 412–432, 435–455, 466–486, and 495–515; these read PMAQ…CGHA, LVSV…YCLF, FLLA…LMEW, LVMT…GSVA, MLQL…WWLP, IISM…ALDL, IFLL…GSLL, FLVL…GMGV, SALA…ITIF, MTAV…GPLV, and WMPL…ALLL. A Phosphoserine modification is found at Ser-534. Thr-542 carries the post-translational modification Phosphothreonine.

This sequence belongs to the major facilitator (TC 2.A.1) superfamily. Organic cation transporter (TC 2.A.1.19) family. Interacts with PDZK1. In terms of processing, N-glycosylated. In terms of tissue distribution, detected in kidney (at protein level). Detected in kidney cortex, in proximal tubules.

It localises to the apical cell membrane. The catalysed reaction is urate(out) + (S)-lactate(in) = urate(in) + (S)-lactate(out). It carries out the reaction nicotinate(in) + urate(out) = nicotinate(out) + urate(in). The enzyme catalyses urate(out) + n chloride(in) = urate(in) + n chloride(out). It catalyses the reaction orotate(out) + nicotinate(in) = orotate(in) + nicotinate(out). In terms of biological role, electroneutral antiporter that translocates urate across the apical membrane of proximal tubular cells in exchange for monovalent organic or inorganic anions. Involved in renal reabsorption of urate and helps maintaining blood levels of uric acid. Mediates urate uptake by an exchange with organic anions such as (S)-lactate and nicotinate, and inorganic anion Cl(-). Other inorganic anions such as Br(-), I(-) and NO3(-) may also act as counteranions that exchange for urate. Also mediates orotate tubular uptake coupled with nicotinate efflux and to a lesser extent with lactate efflux, therefore displaying a potential role in orotate renal reabsorption. Orotate transport is Cl(-)-dependent. The sequence is that of Solute carrier family 22 member 12 from Mus musculus (Mouse).